A 286-amino-acid chain; its full sequence is Bifunctional protein FolD (286 aa).

NADP(+)-binding positions include 165–167 (GRS), Ser-190, and Val-231.

This sequence belongs to the tetrahydrofolate dehydrogenase/cyclohydrolase family. Homodimer.

The enzyme catalyses (6R)-5,10-methylene-5,6,7,8-tetrahydrofolate + NADP(+) = (6R)-5,10-methenyltetrahydrofolate + NADPH. It catalyses the reaction (6R)-5,10-methenyltetrahydrofolate + H2O = (6R)-10-formyltetrahydrofolate + H(+). The protein operates within one-carbon metabolism; tetrahydrofolate interconversion. Functionally, catalyzes the oxidation of 5,10-methylenetetrahydrofolate to 5,10-methenyltetrahydrofolate and then the hydrolysis of 5,10-methenyltetrahydrofolate to 10-formyltetrahydrofolate. This is Bifunctional protein FolD from Bacillus cereus (strain G9842).